We begin with the raw amino-acid sequence, 588 residues long: Nuclear hormone receptor family member nhr-23 (588 aa).

Residues 50–73 (LHAKSSLQPSLSIETPKSKENDES) are disordered. Polar residues predominate over residues 52-64 (AKSSLQPSLSIET). The segment at residues 160 to 235 (VIPCKVCGDK…LGMSRDAVKF (76 aa)) is a DNA-binding region (nuclear receptor). NR C4-type zinc fingers lie at residues 163-183 (CKVC…CEGC) and 199-223 (CPRQ…LKKC). The NR LBD domain maps to 345–586 (PEEDVATRVI…ALYKELFTAD (242 aa)).

The protein belongs to the nuclear hormone receptor family. NR1 subfamily. Expressed in the germline and oocytes and is a maternal gene product. In males and sperm-producing hermaphrodites, expressed in early pachytene spermatocytes, increasing in level throughout late pachytene. Expression is undetectable in meiotically dividing spermatocytes or mature spermatids.

The protein resides in the nucleus. Its function is as follows. Orphan nuclear receptor. Transcription factor. Modulates expression of target genes, such as Period protein homolog lin-42 and microRNA let-7, by binding to hormone response elements (HRE). Involved in promoting oscillatory expression of the primary transcripts of let-7 and paralogous microRNAs miR-48, miR-84, and miR-241. Plays a role in normal development and required to regulate each larval molt. Involved in regulating both the frequency and number of molts, acting as part of a negative feedback loop with the let-7 family of microRNAs, perhaps contributing to a self-sustaining molecular-genetic oscillator. Positively modulates expression of collagen and hedgehog-related genes. Involved in development of the gonad and associated epidermal structures. Required in spermatogenesis, acting following the sperm/oocyte cell fate decision, downstream of the canonical sex-determination pathway. Involved in regulating formation of the sperm-specific fibrous body-membranous organelle (FB-MO) complexes, acting independently of transcription regulator spe-44. This Caenorhabditis elegans protein is Nuclear hormone receptor family member nhr-23.